We begin with the raw amino-acid sequence, 565 residues long: MSQEFDYIIVGAGSAGNTLATRLTEDAGVTVLLLEAGGPDYRFDFRTQMPAALAFPLQGRRYNWAYETDPEPYMDGRRMECGRGKGLGGSSLINGMCYIRGNAMDFDGWAELPGLEDWTYLDCLPYFRKAETRDIGPNDYHGGDGPVSVATPKAGNNPLFHAMVEAGVQAGYPRTEDLNGYQQEGFGPMDRSVTKNGRRSSTARGYLDQAKKRPNLTIVTHALTDRVLFDGKRAVGVTYLVGDSEERVEARARKEVIVSSGAIASPQLLQRSGVGPRALLESLDIPVVHDLPGVGENLQDHLELYLQYACTQPVSLYPSLLWWNQPAIGAEWLFNGTGIGASNQFEAGGFIRTRPEFKWPNIQYHFLPVAINYNGSNGVKEHGFQAHMGSMRSPARGRIQAKSKDPRQHPSILFNYMSTEQDWQEFRDGIRLTREIMAQPALDPYRGREISPGAHVQTDEELDKFIREHAETAFHPSCSCKMGTDDMAVVDGEGRVHGMKGLRVVDASIMPLIITGNLNATTIMIAEKISDKIRGRKPLPRSTAKYYVAGDAPVKGKPMREVKQG.

6–35 (DYIIVGAGSAGNTLATRLTEDAGVTVLLLE) contributes to the FAD binding site. Histidine 475 (proton acceptor) is an active-site residue.

The protein belongs to the GMC oxidoreductase family. Requires FAD as cofactor.

It carries out the reaction choline + A = betaine aldehyde + AH2. The catalysed reaction is betaine aldehyde + NAD(+) + H2O = glycine betaine + NADH + 2 H(+). It participates in amine and polyamine biosynthesis; betaine biosynthesis via choline pathway; betaine aldehyde from choline (cytochrome c reductase route): step 1/1. In terms of biological role, involved in the biosynthesis of the osmoprotectant glycine betaine. Catalyzes the oxidation of choline to betaine aldehyde and betaine aldehyde to glycine betaine at the same rate. The polypeptide is Oxygen-dependent choline dehydrogenase (Pseudomonas putida (strain ATCC 700007 / DSM 6899 / JCM 31910 / BCRC 17059 / LMG 24140 / F1)).